The chain runs to 57 residues: Protein translocase subunit SecE (57 aa).

A helical transmembrane segment spans residues 30–50; that stretch reads LIAGAGIVFVGFLGFLIFAIM.

Belongs to the SecE/SEC61-gamma family. Component of the Sec protein translocase complex. Heterotrimer consisting of SecY (alpha), SecG (beta) and SecE (gamma) subunits. The heterotrimers can form oligomers, although 1 heterotrimer is thought to be able to translocate proteins. Interacts with the ribosome. May interact with SecDF, and other proteins may be involved.

The protein localises to the cell membrane. In terms of biological role, essential subunit of the Sec protein translocation channel SecYEG. Clamps together the 2 halves of SecY. May contact the channel plug during translocation. In Haloquadratum walsbyi (strain DSM 16790 / HBSQ001), this protein is Protein translocase subunit SecE.